Reading from the N-terminus, the 79-residue chain is Acyl carrier protein (79 aa).

The Carrier domain occupies 3–78 (QEILEKVCSI…DAVKFIEEKK (76 aa)). Position 38 is an O-(pantetheine 4'-phosphoryl)serine (S38).

It belongs to the acyl carrier protein (ACP) family. Post-translationally, 4'-phosphopantetheine is transferred from CoA to a specific serine of apo-ACP by AcpS. This modification is essential for activity because fatty acids are bound in thioester linkage to the sulfhydryl of the prosthetic group.

The protein resides in the cytoplasm. Its pathway is lipid metabolism; fatty acid biosynthesis. Functionally, carrier of the growing fatty acid chain in fatty acid biosynthesis. This Prochlorococcus marinus (strain MIT 9301) protein is Acyl carrier protein.